A 101-amino-acid polypeptide reads, in one-letter code: NADH-quinone oxidoreductase subunit K (101 aa).

The next 3 helical transmembrane spans lie at 5 to 25, 30 to 50, and 62 to 82; these read PNWY…GVLF, IVVL…LVTF, and LVFF…AIVI.

It belongs to the complex I subunit 4L family. NDH-1 is composed of 14 different subunits. Subunits NuoA, H, J, K, L, M, N constitute the membrane sector of the complex.

Its subcellular location is the cell inner membrane. The enzyme catalyses a quinone + NADH + 5 H(+)(in) = a quinol + NAD(+) + 4 H(+)(out). In terms of biological role, NDH-1 shuttles electrons from NADH, via FMN and iron-sulfur (Fe-S) centers, to quinones in the respiratory chain. The immediate electron acceptor for the enzyme in this species is believed to be a menaquinone. Couples the redox reaction to proton translocation (for every two electrons transferred, four hydrogen ions are translocated across the cytoplasmic membrane), and thus conserves the redox energy in a proton gradient. The chain is NADH-quinone oxidoreductase subunit K from Salinibacter ruber (strain DSM 13855 / M31).